Here is a 393-residue protein sequence, read N- to C-terminus: Inulin fructotransferase [DFA-I-forming] (393 aa).

The enzyme catalyses Produces alpha-D-fructofuranose beta-D-fructofuranose 1,2':2,1'-dianhydride (DFA I) by successively eliminating the diminishing (2-&gt;1)-beta-D-fructan (inulin) chain from the terminal D-fructosyl-D-fructosyl disaccharide.. The protein is Inulin fructotransferase [DFA-I-forming] of Arthrobacter globiformis.